The sequence spans 378 residues: Palmitoyltransferase PFA4 (378 aa).

Over 1–9 (MPVKLRWPW) the chain is Cytoplasmic. Residues 10 to 30 (LGIAIPTFLISFIGYGAHYFI) traverse the membrane as a helical segment. Topologically, residues 31-40 (LSNFLSVPKQ) are lumenal. The helical transmembrane segment at 41-61 (ITFEFCLSMIWLSYYLAICTN) threads the bilayer. The Cytoplasmic portion of the chain corresponds to 62–119 (PGRPLPNYKPPPDIWRNFCKKCQSYKPERSHHCKTCNQCVLMMDHHCPWTMNCVGFAN). Residues 78-128 (NFCKKCQSYKPERSHHCKTCNQCVLMMDHHCPWTMNCVGFANYPHFLRFLF) enclose the DHHC domain. Residue Cys-108 is the S-palmitoyl cysteine intermediate of the active site. The helical transmembrane segment at 120–140 (YPHFLRFLFWIIVTTSVLFCI) threads the bilayer. The Lumenal segment spans residues 141–164 (QAKRIYFIWQQRHLPGYFFKKSEL). The helical transmembrane segment at 165-185 (IFLTISSPLNSFVLLTITILF) threads the bilayer. The Cytoplasmic portion of the chain corresponds to 186–378 (LRCLFNQILN…DDFGVDVDME (193 aa)).

It belongs to the DHHC palmitoyltransferase family. PFA4 subfamily. Autopalmitoylated.

The protein localises to the endoplasmic reticulum membrane. It catalyses the reaction L-cysteinyl-[protein] + hexadecanoyl-CoA = S-hexadecanoyl-L-cysteinyl-[protein] + CoA. Functionally, mediates the reversible addition of palmitate to target proteins, thereby regulating their membrane association and biological function. Palmitoylates several amino acid permeases. Palmitoylates chitin synthase CHS3, which is required for its proper export from the ER. Can palmitoylate RAS2 in vitro. In Saccharomyces cerevisiae (strain ATCC 204508 / S288c) (Baker's yeast), this protein is Palmitoyltransferase PFA4.